A 430-amino-acid polypeptide reads, in one-letter code: MAGPGAWKRLKSLLRKDDTPLFLNDTSAFDFSDEVSDEGLSRFNKLRVVVADDDSEAPERPVNGAHPALQADDDSLLDQDLPLTNSQLSLKMDPCDNCSKRRELLKQRKVKTRLTIAAVLYLLFMIGELVGGYMANSLAIMTDALHMLTDLSAIILTLLALWLSSKSPTRRFTFGFHRLEVLSAMISVMLVYVLMGFLLYEAVQRTIHMNYEINGDVMLITAAVGVAVNVIMGFLLNQSGHHHSHAHSHSLPSNSPSMVSSGHNHGQDSLAVRAAFVHALGDLVQSVGVLIAAYIIRFKPEYKIADPICTYIFSLLVAFTTFRIIWDTVVIILEGVPSHLNVDYIKESLMKIEDVYSVEDLNIWSLTSGKSTAIVHMQLIPGSSSKWEEVQSKAKHLLLNTFGMYKCTIQLQSYRQEVIRTCANCHSSST.

The Cytoplasmic portion of the chain corresponds to 1 to 113 (MAGPGAWKRL…LLKQRKVKTR (113 aa)). Phosphoserine is present on S36. The chain crosses the membrane as a helical span at residues 114–134 (LTIAAVLYLLFMIGELVGGYM). Residues 135 to 143 (ANSLAIMTD) are Lumenal-facing. Residues 144–164 (ALHMLTDLSAIILTLLALWLS) form a helical membrane-spanning segment. 2 residues coordinate Zn(2+): H146 and D150. The Cytoplasmic portion of the chain corresponds to 165-178 (SKSPTRRFTFGFHR). A helical transmembrane segment spans residues 179 to 199 (LEVLSAMISVMLVYVLMGFLL). Residues 200 to 216 (YEAVQRTIHMNYEINGD) are Lumenal-facing. The chain crosses the membrane as a helical span at residues 217–237 (VMLITAAVGVAVNVIMGFLLN). Residues 238–275 (QSGHHHSHAHSHSLPSNSPSMVSSGHNHGQDSLAVRAA) lie on the Cytoplasmic side of the membrane. Positions 240-265 (GHHHSHAHSHSLPSNSPSMVSSGHNH) are zinc binding. The segment at 245–264 (HAHSHSLPSNSPSMVSSGHN) is disordered. Positions 249–263 (HSLPSNSPSMVSSGH) are enriched in low complexity. A helical membrane pass occupies residues 276–296 (FVHALGDLVQSVGVLIAAYII). Zn(2+)-binding residues include H278 and D282. Topologically, residues 297 to 311 (RFKPEYKIADPICTY) are lumenal. A helical transmembrane segment spans residues 312–332 (IFSLLVAFTTFRIIWDTVVII). Residues 333 to 430 (LEGVPSHLNV…TCANCHSSST (98 aa)) are Cytoplasmic-facing.

It belongs to the cation diffusion facilitator (CDF) transporter (TC 2.A.4) family. SLC30A subfamily. In terms of assembly, homodimerization could regulate efficiency for zinc transport. Interacts with TMEM163. In terms of tissue distribution, widely expressed. Highly expressed in the brain and in mammary epithelial cell lines.

Its subcellular location is the endosome membrane. It localises to the late endosome membrane. The protein resides in the lysosome membrane. The catalysed reaction is Zn(2+)(in) + 2 H(+)(out) = Zn(2+)(out) + 2 H(+)(in). Functionally, probable proton-coupled zinc ion antiporter mediating zinc import from cytoplasm potentially into the endocytic compartment. Controls zinc deposition in milk. The polypeptide is Probable proton-coupled zinc antiporter SLC30A4 (Mus musculus (Mouse)).